The sequence spans 583 residues: Pyruvate kinase isozyme A, chloroplastic (583 aa).

A chloroplast-targeting transit peptide spans 1–74 (MSQSLHFSPN…NSGVLYNNNN (74 aa)). Residues 43–52 (KASTSPSSSS) are compositionally biased toward low complexity. The segment at 43–75 (KASTSPSSSSDPQVLVADNGTGNSGVLYNNNNK) is disordered. A compositionally biased stretch (polar residues) spans 62–75 (GTGNSGVLYNNNNK). R134 provides a ligand contact to substrate. K(+) contacts are provided by N136, D168, and T169. Position 136–139 (136–139 (NMCH)) interacts with ATP. Mg(2+) is bound at residue E333. 3 residues coordinate substrate: G356, D357, and S389. D357 is a Mg(2+) binding site.

The protein belongs to the pyruvate kinase family. In terms of assembly, oligomer of alpha and beta subunits. Requires Mg(2+) as cofactor. The cofactor is K(+).

It is found in the plastid. The protein resides in the chloroplast. It catalyses the reaction pyruvate + ATP = phosphoenolpyruvate + ADP + H(+). The protein operates within carbohydrate degradation; glycolysis; pyruvate from D-glyceraldehyde 3-phosphate: step 5/5. The chain is Pyruvate kinase isozyme A, chloroplastic from Ricinus communis (Castor bean).